Reading from the N-terminus, the 846-residue chain is Translation initiation factor IF-2 (846 aa).

The interval 198 to 219 (YKREEEEKKSKAKKAGGKGFKK) is disordered. The segment covering 207-219 (SKAKKAGGKGFKK) has biased composition (basic residues). The tr-type G domain maps to 345–512 (SRAPVVTIMG…AVLLQSEVLE (168 aa)). Positions 354-361 (GHVDHGKT) are G1. 354 to 361 (GHVDHGKT) is a GTP binding site. The G2 stretch occupies residues 379 to 383 (GITQH). A G3 region spans residues 400–403 (DTPG). GTP is bound by residues 400–404 (DTPGH) and 454–457 (NKID). The tract at residues 454–457 (NKID) is G4. The segment at 490-492 (SAK) is G5.

It belongs to the TRAFAC class translation factor GTPase superfamily. Classic translation factor GTPase family. IF-2 subfamily.

It localises to the cytoplasm. One of the essential components for the initiation of protein synthesis. Protects formylmethionyl-tRNA from spontaneous hydrolysis and promotes its binding to the 30S ribosomal subunits. Also involved in the hydrolysis of GTP during the formation of the 70S ribosomal complex. This is Translation initiation factor IF-2 from Francisella tularensis subsp. novicida (strain U112).